The following is a 743-amino-acid chain: NAD(P)H-quinone oxidoreductase subunit 5, chloroplastic (743 aa).

Transmembrane regions (helical) follow at residues Trp9–Phe29, Trp40–Ile60, Ile89–Ile109, Phe125–Ile145, Ile147–Thr167, Gly185–Phe205, Asn219–Ala239, Thr258–Ala278, Phe284–Phe304, Leu327–Ile347, Ala354–Cys374, Asn396–Ser416, Trp425–Tyr445, Leu551–Phe571, Val607–Val627, and Tyr723–Leu743.

Belongs to the complex I subunit 5 family. In terms of assembly, NDH is composed of at least 16 different subunits, 5 of which are encoded in the nucleus.

Its subcellular location is the plastid. The protein localises to the chloroplast thylakoid membrane. It carries out the reaction a plastoquinone + NADH + (n+1) H(+)(in) = a plastoquinol + NAD(+) + n H(+)(out). The catalysed reaction is a plastoquinone + NADPH + (n+1) H(+)(in) = a plastoquinol + NADP(+) + n H(+)(out). NDH shuttles electrons from NAD(P)H:plastoquinone, via FMN and iron-sulfur (Fe-S) centers, to quinones in the photosynthetic chain and possibly in a chloroplast respiratory chain. The immediate electron acceptor for the enzyme in this species is believed to be plastoquinone. Couples the redox reaction to proton translocation, and thus conserves the redox energy in a proton gradient. This is NAD(P)H-quinone oxidoreductase subunit 5, chloroplastic (ndhF) from Ambrosia trifida (Giant ragweed).